A 536-amino-acid chain; its full sequence is Bicoumarin synthase desC (536 aa).

Residues 12–32 (YVALAGITGFFLVFLGFLVVI) traverse the membrane as a helical segment. N-linked (GlcNAc...) asparagine glycosylation is found at asparagine 149 and asparagine 371. Cysteine 480 serves as a coordination point for heme.

This sequence belongs to the cytochrome P450 family. Requires heme as cofactor.

It localises to the membrane. It catalyses the reaction 2 7-demethylsiderin + NADPH + O2 = desertorin A + NADP(+) + 2 H2O. It participates in secondary metabolite biosynthesis. Its function is as follows. Non-reducing polyketide synthase; part of the gene cluster that mediates the biosynthesis of the bicoumarin desertorin. The non-reducing polyketide synthase desS first catalyzes the formation of the pentaketidic 4,7-dihydroxy-5-methylcoumarin from acetyl coenzyme A and 4 malonyl coenzyme A molecules. Further O-methylation by desB leads to the formation of 7-demethylsiderin. Then, an oxidative phenol coupling catalyzed by the cytochrome P450 monooxygenase desC forms the 6,8'-dimer M-desertorin A via dimerization the monomeric precursor, 7-demethylsiderin. M-desertorin A is further converted to M-desertorin C. The chain is Bicoumarin synthase desC from Aspergillus desertorum (Emericella desertorum).